Reading from the N-terminus, the 333-residue chain is 4-hydroxy-3-methylbut-2-enyl diphosphate reductase (333 aa).

Cysteine 34 is a binding site for [4Fe-4S] cluster. (2E)-4-hydroxy-3-methylbut-2-enyl diphosphate-binding residues include histidine 63 and histidine 96. Dimethylallyl diphosphate contacts are provided by histidine 63 and histidine 96. The isopentenyl diphosphate site is built by histidine 63 and histidine 96. Cysteine 118 is a binding site for [4Fe-4S] cluster. Histidine 146 serves as a coordination point for (2E)-4-hydroxy-3-methylbut-2-enyl diphosphate. Histidine 146 is a dimethylallyl diphosphate binding site. Histidine 146 lines the isopentenyl diphosphate pocket. Glutamate 148 functions as the Proton donor in the catalytic mechanism. Threonine 186 is a binding site for (2E)-4-hydroxy-3-methylbut-2-enyl diphosphate. Cysteine 216 is a [4Fe-4S] cluster binding site. Residues serine 244, serine 245, asparagine 246, and serine 289 each coordinate (2E)-4-hydroxy-3-methylbut-2-enyl diphosphate. Dimethylallyl diphosphate is bound by residues serine 244, serine 245, asparagine 246, and serine 289. Positions 244, 245, 246, and 289 each coordinate isopentenyl diphosphate.

The protein belongs to the IspH family. Requires [4Fe-4S] cluster as cofactor.

It catalyses the reaction isopentenyl diphosphate + 2 oxidized [2Fe-2S]-[ferredoxin] + H2O = (2E)-4-hydroxy-3-methylbut-2-enyl diphosphate + 2 reduced [2Fe-2S]-[ferredoxin] + 2 H(+). The catalysed reaction is dimethylallyl diphosphate + 2 oxidized [2Fe-2S]-[ferredoxin] + H2O = (2E)-4-hydroxy-3-methylbut-2-enyl diphosphate + 2 reduced [2Fe-2S]-[ferredoxin] + 2 H(+). Its pathway is isoprenoid biosynthesis; dimethylallyl diphosphate biosynthesis; dimethylallyl diphosphate from (2E)-4-hydroxy-3-methylbutenyl diphosphate: step 1/1. It functions in the pathway isoprenoid biosynthesis; isopentenyl diphosphate biosynthesis via DXP pathway; isopentenyl diphosphate from 1-deoxy-D-xylulose 5-phosphate: step 6/6. Its function is as follows. Catalyzes the conversion of 1-hydroxy-2-methyl-2-(E)-butenyl 4-diphosphate (HMBPP) into a mixture of isopentenyl diphosphate (IPP) and dimethylallyl diphosphate (DMAPP). Acts in the terminal step of the DOXP/MEP pathway for isoprenoid precursor biosynthesis. The chain is 4-hydroxy-3-methylbut-2-enyl diphosphate reductase from Mycobacterium sp. (strain KMS).